Consider the following 1659-residue polypeptide: Cortactin-binding protein 2 (1659 aa).

The tract at residues 1–23 (MATDGASCEPDLSRAPEDAAGAA) is disordered. The stretch at 119–276 (RKMQERMSAQ…EQLKRGSDSK (158 aa)) forms a coiled coil. Disordered regions lie at residues 324–436 (LTMP…LHPG) and 450–474 (GNANDPDQNGNTTQSPPSRDVSPTS). Composition is skewed to low complexity over residues 337–348 (ASANAKGSAAMA) and 381–392 (GPSTGLTPDPTS). The span at 405–418 (TAQTPGITPQNSQA) shows a compositional bias: polar residues. At Arg-494 the chain carries Asymmetric dimethylarginine. Residues 495 to 612 (FTGPQAGAPP…SSPQLPPKPS (118 aa)) are disordered. Polar residues predominate over residues 579 to 589 (TVASPPSSLPQ). ANK repeat units follow at residues 705-735 (GRPTLLQQAAAQGNVTLLLMLLNEEGLDINY), 739-768 (DGHSALYSAAKNGHTDCVRLLLSAEAQVNA), 772-801 (NGFTPLCAAAAQGHFECVELLIAYDANINH), 805-834 (GGQTPLYLACKNGNKECIKLLLEAGTDRNV), and 838-867 (DGWTPVHAAVDTGNVDSLKLLMYHRVPAHG). The disordered stretch occupies residues 869-893 (SFSEEESESGVFDLDGGGESPEGKS). One copy of the ANK 6 repeat lies at 908–938 (EGWTAAHIAASKGFKNCLEILCRHGGLETER). A disordered region spans residues 1443-1478 (KKKGESGAWRKVNTSPRRKSGRFSLPTWNKPDLSTE). Ser-1520 bears the Phosphoserine mark. The interval 1613–1659 (RSKVTQCSQNTKRNSSSSNTRQIEINNNSKEENWNLHKNEHLEKPNK) is disordered. Positions 1620–1634 (SQNTKRNSSSSNTRQ) are enriched in low complexity. Residues 1641-1659 (SKEENWNLHKNEHLEKPNK) are compositionally biased toward basic and acidic residues.

As to quaternary structure, interacts with CTTN/cortactin SH3 domain. Interacts with STRN, STRN4/zinedin and MOB4/phocein; this interactions mediate the association with the STRIPAK core complex and may regulate dendritic spine distribution of the STRIPAK complex in hippocampal neurons. Activation of glutamate receptors weakens the interaction with STRN and STRN4.

The protein localises to the cytoplasm. It is found in the cell cortex. Its subcellular location is the cell projection. It localises to the dendritic spine. In terms of biological role, regulates the dendritic spine distribution of CTTN/cortactin in hippocampal neurons, and thus controls dendritic spinogenesis and dendritic spine maintenance. Associates with the striatin-interacting phosphatase and kinase (STRIPAK) core complex to regulate dendritic spine distribution of the STRIPAK complex in hippocampal neurons. The sequence is that of Cortactin-binding protein 2 (CTTNBP2) from Saimiri boliviensis boliviensis (Bolivian squirrel monkey).